Reading from the N-terminus, the 116-residue chain is NADH-ubiquinone oxidoreductase chain 3 (116 aa).

3 helical membrane passes run L3–F23, F56–L76, and T88–A108.

Belongs to the complex I subunit 3 family. Core subunit of respiratory chain NADH dehydrogenase (Complex I) which is composed of 45 different subunits.

It is found in the mitochondrion inner membrane. It carries out the reaction a ubiquinone + NADH + 5 H(+)(in) = a ubiquinol + NAD(+) + 4 H(+)(out). Functionally, core subunit of the mitochondrial membrane respiratory chain NADH dehydrogenase (Complex I) which catalyzes electron transfer from NADH through the respiratory chain, using ubiquinone as an electron acceptor. Essential for the catalytic activity of complex I. The chain is NADH-ubiquinone oxidoreductase chain 3 (mt-nd3) from Danio rerio (Zebrafish).